The chain runs to 255 residues: MNINKIALIYNQNSKHLAIIEEIKKLYNYCKIEEAEAIIVIGGDGELLHNIHRYMNLNIPFYGVNLGSLGFLMNPLDTKNLLQNIHESTVSILNPLLMQAEDISGQIYTALAINEVSIFRKTNQAAKFRIDVNGIERMSELVADGALVATPAGSSAYNLSAGGPILPLDSNMLCLTPICSFRPRRWHGALLLSSATIKFEILNTNKRPVNATADFQEFNNITNVTVKSTKDKPIKLLFNKNHTLEDRIIKEQFGG.

Asp-44 acts as the Proton acceptor in catalysis. NAD(+) contacts are provided by residues Asp-44–Gly-45, His-49, Asn-114–Glu-115, Asp-144, Ala-152, Ser-155–Ser-160, and Gln-216.

Belongs to the NAD kinase family. The cofactor is a divalent metal cation.

The protein localises to the cytoplasm. The catalysed reaction is NAD(+) + ATP = ADP + NADP(+) + H(+). In terms of biological role, involved in the regulation of the intracellular balance of NAD and NADP, and is a key enzyme in the biosynthesis of NADP. Catalyzes specifically the phosphorylation on 2'-hydroxyl of the adenosine moiety of NAD to yield NADP. In Rickettsia felis (strain ATCC VR-1525 / URRWXCal2) (Rickettsia azadi), this protein is NAD kinase.